Consider the following 566-residue polypeptide: Membrane protein insertase YidC (566 aa).

A helical membrane pass occupies residues 6–26 (NLLLLALLFVSFLLYTAWVEE). Residues 30 to 80 (QVAPQVQTEQVDSSVPASVASSANSANLSDGVPNSPQQSSTDATSTELPAS) form a disordered region. Over residues 31-41 (VAPQVQTEQVD) the composition is skewed to polar residues. The segment covering 42 to 58 (SSVPASVASSANSANLS) has biased composition (low complexity). The segment covering 61–80 (VPNSPQQSSTDATSTELPAS) has biased composition (polar residues). 4 helical membrane passes run 356–376 (LLLFFQGIVGNWGVAIILITF), 433–453 (LGGCFPILLQMPIFIALYWSL), 471–491 (LSVQDPYYILPILMGVSMFFI), and 510–530 (FMPVIFTFFFLWFPAGLVLYW).

Belongs to the OXA1/ALB3/YidC family. Type 1 subfamily. In terms of assembly, interacts with the Sec translocase complex via SecD. Specifically interacts with transmembrane segments of nascent integral membrane proteins during membrane integration.

It localises to the cell inner membrane. Required for the insertion and/or proper folding and/or complex formation of integral membrane proteins into the membrane. Involved in integration of membrane proteins that insert both dependently and independently of the Sec translocase complex, as well as at least some lipoproteins. Aids folding of multispanning membrane proteins. The protein is Membrane protein insertase YidC of Psychromonas ingrahamii (strain DSM 17664 / CCUG 51855 / 37).